An 81-amino-acid polypeptide reads, in one-letter code: Photosystem I iron-sulfur center (81 aa).

2 4Fe-4S ferredoxin-type domains span residues 1–31 (MSHS…MVPW) and 39–68 (IASS…IRVY). The [4Fe-4S] cluster site is built by C11, C14, C17, C21, C48, C51, C54, and C58.

In terms of assembly, the cyanobacterial PSI reaction center is composed of one copy each of PsaA,B,C,D,E,F,I,J,K,L,M and X, and forms trimeric complexes. It depends on [4Fe-4S] cluster as a cofactor.

Its subcellular location is the cellular thylakoid membrane. The enzyme catalyses reduced [plastocyanin] + hnu + oxidized [2Fe-2S]-[ferredoxin] = oxidized [plastocyanin] + reduced [2Fe-2S]-[ferredoxin]. Functionally, apoprotein for the two 4Fe-4S centers FA and FB of photosystem I (PSI); essential for photochemical activity. FB is the terminal electron acceptor of PSI, donating electrons to ferredoxin. The C-terminus interacts with PsaA/B/D and helps assemble the protein into the PSI complex. Required for binding of PsaD and PsaE to PSI. PSI is a plastocyanin/cytochrome c6-ferredoxin oxidoreductase, converting photonic excitation into a charge separation, which transfers an electron from the donor P700 chlorophyll pair to the spectroscopically characterized acceptors A0, A1, FX, FA and FB in turn. The sequence is that of Photosystem I iron-sulfur center from Microcystis aeruginosa (strain NIES-843 / IAM M-2473).